Consider the following 316-residue polypeptide: MACQCFLVGAGYVALAAVAYRILTIFSNILGPYVLLSPIDLKKRAGASWAVITGATDGIGKAYAFELARRGFNVFIVSRTQSKLDETKKEILEKYPNIEVRTAAYDFTNAAPSGYKNLLETLNKVEIGVLVNNVGLSYEYPDVLHKVDGGIERLANITTINTLPPTLLSAGILPQMVARKAGVIVNVGSSASANQMALWAVYSATKKYVSWLTAILRKEYEHQGITIQTIAPMMVATKMSKVKRTSFFTPDGATFAKSALNTVGNSSDTTGYITHQLQLEVMDLIPTFIRDKILTNMSVGTRAAALRKKEREAKAQ.

NADP(+) is bound by residues 52-80 (ITGATDGIGKAYAFELARRGFNVFIVSRT) and D106. S189 provides a ligand contact to substrate. The Proton acceptor role is filled by Y202. NADP(+) is bound at residue K206.

It belongs to the short-chain dehydrogenases/reductases (SDR) family. 17-beta-HSD 3 subfamily.

It catalyses the reaction a very-long-chain (3R)-3-hydroxyacyl-CoA + NADP(+) = a very-long-chain 3-oxoacyl-CoA + NADPH + H(+). It functions in the pathway lipid metabolism; fatty acid biosynthesis. Functionally, required for branched chain fatty acid synthesis. Catalyzes the reduction of the 3-ketoacyl-CoA intermediate that is formed in each cycle of fatty acid elongation. Very long-chain fatty acids (VLCFAs) serve as precursors for ceramide and sphingolipids. May also be required for sterol hormone production. This is Very-long-chain 3-oxooacyl-coA reductase let-767 from Caenorhabditis briggsae.